Reading from the N-terminus, the 662-residue chain is MSQSVSLTFPDGSVRSYDAGATGRDVAESISKSLAKKAVAIAIDGTVRDLSEPVADGKIEIITRNDDRALELIRHDAAHVMAEAVQELWPGTQVTIGPVIENGFYYDFAKNEPFTPDDLPVIEKKMREIIQRNKPFTRQIWSREKAKQVFADKGERYKVELVDAIPEGQDLKIYYQGDWFDLCRGPHMASTGQIGTAFKLMKVAGAYWRGDSNNPMLTRIYGTAFAEQADLDNYLHILAEAEKRDHRRLGREMDLFHFQEEGPGVVFWHGKGWRIFQTLVSYMRRRLEGDYQEVNAPQVLDKSLWETSGHWGWYRDNMFKVTVAGDDTDDDRVFALKPMNCPGHIQIFKHGLKSYRELPIRLAEFGNVHRYEPSGALHGLMRVRGFTQDDAHIFCTDEQMAAECLKINDLILSVYEDFGFEEVVVKLSTRPEKRVGDDALWDRAESVMMEVLKTIEAQSGGRIKTGILPGEGAFYGPKFEYTLKDAIGREWQCGTTQVDFNLPERFGAFYIDQHSEKTQPVMIHRAICGSMERFLGILIENFAGHMPLWVSPLQVVVATITSEADGYGEEVAEALRDAGLTVETDFRNEKINYKIREHSVTKVPVIIVCGKKEAEERSVNIRRLGSQAQTAMSLDEAIASLSLEATPPDVLRKREAKRAKVA.

Positions 1-64 (MSQSVSLTFP…ADGKIEIITR (64 aa)) constitute a TGS domain. The tract at residues 245-547 (DHRRLGREMD…LIENFAGHMP (303 aa)) is catalytic. Residues C341, H392, and H524 each contribute to the Zn(2+) site.

This sequence belongs to the class-II aminoacyl-tRNA synthetase family. In terms of assembly, homodimer. Zn(2+) is required as a cofactor.

The protein localises to the cytoplasm. The enzyme catalyses tRNA(Thr) + L-threonine + ATP = L-threonyl-tRNA(Thr) + AMP + diphosphate + H(+). Catalyzes the attachment of threonine to tRNA(Thr) in a two-step reaction: L-threonine is first activated by ATP to form Thr-AMP and then transferred to the acceptor end of tRNA(Thr). Also edits incorrectly charged L-seryl-tRNA(Thr). This Rhizobium rhizogenes (strain K84 / ATCC BAA-868) (Agrobacterium radiobacter) protein is Threonine--tRNA ligase.